We begin with the raw amino-acid sequence, 575 residues long: Carboxylesterase 5A (575 aa).

An N-terminal signal peptide occupies residues Met1–Ala27. The N-linked (GlcNAc...) asparagine glycan is linked to Asn82. Cys94 and Cys121 are joined by a disulfide. The Acyl-ester intermediate role is filled by Ser226. An intrachain disulfide couples Cys280 to Cys291. N-linked (GlcNAc...) asparagine glycosylation is present at Asn281. Catalysis depends on Glu345, which acts as the Charge relay system. Asn363 carries N-linked (GlcNAc...) asparagine glycosylation. The active-site Charge relay system is the His454. The N-linked (GlcNAc...) asparagine glycan is linked to Asn524.

This sequence belongs to the type-B carboxylesterase/lipase family. N-glycosylated.

The protein resides in the secreted. It catalyses the reaction a carboxylic ester + H2O = an alcohol + a carboxylate + H(+). Its function is as follows. Involved in the detoxification of xenobiotics and in the activation of ester and amide prodrugs. The protein is Carboxylesterase 5A (CES5A) of Canis lupus familiaris (Dog).